The sequence spans 159 residues: MNQVRKADPNNKTVAENRKARFSYEVLDTIEAGLVLTGTEVKSLRQGQANIQDSYASVEGGEIWLINSYLPEYLQANRFNHEPRRRRKLLLNKREMAKLSQSVDREGMTLVPLKIYFNDQGRAKLLLAVGRGKKLHDKRETEKQRDWSREKGRLLKERG.

The segment at 137–159 (DKRETEKQRDWSREKGRLLKERG) is disordered.

It belongs to the SmpB family.

It is found in the cytoplasm. In terms of biological role, required for rescue of stalled ribosomes mediated by trans-translation. Binds to transfer-messenger RNA (tmRNA), required for stable association of tmRNA with ribosomes. tmRNA and SmpB together mimic tRNA shape, replacing the anticodon stem-loop with SmpB. tmRNA is encoded by the ssrA gene; the 2 termini fold to resemble tRNA(Ala) and it encodes a 'tag peptide', a short internal open reading frame. During trans-translation Ala-aminoacylated tmRNA acts like a tRNA, entering the A-site of stalled ribosomes, displacing the stalled mRNA. The ribosome then switches to translate the ORF on the tmRNA; the nascent peptide is terminated with the 'tag peptide' encoded by the tmRNA and targeted for degradation. The ribosome is freed to recommence translation, which seems to be the essential function of trans-translation. This Mesorhizobium japonicum (strain LMG 29417 / CECT 9101 / MAFF 303099) (Mesorhizobium loti (strain MAFF 303099)) protein is SsrA-binding protein.